Reading from the N-terminus, the 513-residue chain is Aspartyl protease family protein 1 (513 aa).

A signal peptide spans 1 to 21 (MVWYSSCRILFLGLLILLASS). The Peptidase A1 domain occupies 104–445 (HYANVTVGTP…DREKLILGWK (342 aa)). Active-site residues include Asp-122 and Asp-327. The segment at 452–488 (GETSARTLPSNRSSSSARPPASSFDPEATNIPSQRPN) is disordered. Residues 455-474 (SARTLPSNRSSSSARPPASS) are compositionally biased toward low complexity. Ser-484 carries GPI-anchor amidated serine lipidation. Positions 485 to 513 (QRPNTSTTSAAYSLSISLSLFFFSILAIL) are cleaved as a propeptide — removed in mature form.

It belongs to the peptidase A1 family.

The protein resides in the cell membrane. Functionally, aspartyl protease. Not able to cleave BAG6. This is Aspartyl protease family protein 1 from Arabidopsis thaliana (Mouse-ear cress).